The sequence spans 509 residues: Bifunctional purine biosynthesis protein PurH (509 aa).

Residues 1 to 144 (MKRALISVSD…KNYAAVTVVV (144 aa)) form the MGS-like domain.

Belongs to the PurH family.

It catalyses the reaction (6R)-10-formyltetrahydrofolate + 5-amino-1-(5-phospho-beta-D-ribosyl)imidazole-4-carboxamide = 5-formamido-1-(5-phospho-D-ribosyl)imidazole-4-carboxamide + (6S)-5,6,7,8-tetrahydrofolate. The enzyme catalyses IMP + H2O = 5-formamido-1-(5-phospho-D-ribosyl)imidazole-4-carboxamide. The protein operates within purine metabolism; IMP biosynthesis via de novo pathway; 5-formamido-1-(5-phospho-D-ribosyl)imidazole-4-carboxamide from 5-amino-1-(5-phospho-D-ribosyl)imidazole-4-carboxamide (10-formyl THF route): step 1/1. Its pathway is purine metabolism; IMP biosynthesis via de novo pathway; IMP from 5-formamido-1-(5-phospho-D-ribosyl)imidazole-4-carboxamide: step 1/1. The sequence is that of Bifunctional purine biosynthesis protein PurH from Listeria monocytogenes serotype 4a (strain HCC23).